The following is a 226-amino-acid chain: MVKPPAGGNEGGRGKPARLKTAYGRTPSQQAWLERQINDPFSAKARALGYRSRAAFKISEIDDKFHFFSKGAKVIDLGCAPGGWLQIAVERGVTTLAGIDLLPVDPVAPAHLLEMDFTADGAPEKLLELLGGEPDLVMSDMAPNTVGHRETDHLRIVGLIEIAAEFAIDVLKPGGAFVAKAFQGGETAEIIGKLKRHFDKVQHFKPKASRQDSSEVFLVATGFKGR.

The disordered stretch occupies residues 1-25 (MVKPPAGGNEGGRGKPARLKTAYGR). Residues Gly-82, Trp-84, Asp-100, Asp-116, and Asp-140 each coordinate S-adenosyl-L-methionine. Lys-180 (proton acceptor) is an active-site residue.

It belongs to the class I-like SAM-binding methyltransferase superfamily. RNA methyltransferase RlmE family.

It localises to the cytoplasm. The catalysed reaction is uridine(2552) in 23S rRNA + S-adenosyl-L-methionine = 2'-O-methyluridine(2552) in 23S rRNA + S-adenosyl-L-homocysteine + H(+). In terms of biological role, specifically methylates the uridine in position 2552 of 23S rRNA at the 2'-O position of the ribose in the fully assembled 50S ribosomal subunit. The chain is Ribosomal RNA large subunit methyltransferase E from Caulobacter vibrioides (strain ATCC 19089 / CIP 103742 / CB 15) (Caulobacter crescentus).